The chain runs to 960 residues: Endosome/lysosome-associated apoptosis and autophagy regulator family member 2 (960 aa).

Residues 1–26 are disordered; sequence MLFLRPGPARGRGRGRPARAPHSGLS. The N-terminal stretch at 1 to 44 is a signal peptide; the sequence is MLFLRPGPARGRGRGRPARAPHSGLSPPWSPAWICCWALAGCQA. Residues 45 to 860 lie on the Extracellular side of the membrane; that stretch reads AWAGAGDLPS…TCETVDFWLK (816 aa). A glycan (N-linked (GlcNAc...) asparagine) is linked at N171. Intrachain disulfides connect C295–C312, C325–C348, and C328–C360. 2 N-linked (GlcNAc...) asparagine glycosylation sites follow: N407 and N622. The region spanning 597 to 808 is the MRH domain; that stretch reads PTCPYIRSMA…LWESVEACPL (212 aa). Intrachain disulfides connect C599–C651, C661–C689, C758–C794, and C770–C806. The chain crosses the membrane as a helical span at residues 861–881; it reads VGAGVGAFTAVLLVALTCYFW. The Cytoplasmic segment spans residues 882–960; that stretch reads KKNQKLEYKY…QLKSSRSPNI (79 aa). At S949 the chain carries Phosphoserine.

This sequence belongs to the ELAPOR family.

It is found in the cell membrane. Functions as a regulator of the BMP signaling pathway and may be involved in epidermal differentiation. In Bos taurus (Bovine), this protein is Endosome/lysosome-associated apoptosis and autophagy regulator family member 2.